The sequence spans 410 residues: Arginine deiminase (410 aa).

The Amidino-cysteine intermediate role is filled by Cys-400.

It belongs to the arginine deiminase family.

It is found in the cytoplasm. It carries out the reaction L-arginine + H2O = L-citrulline + NH4(+). It functions in the pathway amino-acid degradation; L-arginine degradation via ADI pathway; carbamoyl phosphate from L-arginine: step 1/2. The chain is Arginine deiminase from Streptococcus agalactiae serotype III (strain NEM316).